A 297-amino-acid polypeptide reads, in one-letter code: MGDIFHIPVLLEDVINLVETIYLDDGFVFVDCTLGEGGHSKAVLSKYQNINVIGIERDDVVLNRAKESLVEFSKRISYSNTWFDDFFCKYSLHRRFNFILADLGISMFHYKVAGRGFSFLEDEKLDMRLFPSDGGISAYDIVNTFDKEMLENLIYELGGEYYSRRIVKAILEYRKINKIQTSRELQRIICKAYPNVKFKINPATKTFQALRIYVNDELDRLKRSLPLWIANLSKNGILAIITFHSLEDKIVKEFFKGLTKDKYCILTKKPITSSFKEKQYNNASRSAKLRAVKKLYE.

S-adenosyl-L-methionine is bound by residues 37–39 (GGH), Glu56, Phe87, Asp102, and His109.

Belongs to the methyltransferase superfamily. RsmH family.

It localises to the cytoplasm. The catalysed reaction is cytidine(1402) in 16S rRNA + S-adenosyl-L-methionine = N(4)-methylcytidine(1402) in 16S rRNA + S-adenosyl-L-homocysteine + H(+). Specifically methylates the N4 position of cytidine in position 1402 (C1402) of 16S rRNA. The sequence is that of Ribosomal RNA small subunit methyltransferase H from Borrelia recurrentis (strain A1).